The chain runs to 359 residues: Fructose-bisphosphate aldolase (359 aa).

Ser-50 serves as a coordination point for D-glyceraldehyde 3-phosphate. Asp-83 functions as the Proton donor in the catalytic mechanism. Residues His-84, Asp-105, Glu-142, and His-198 each coordinate Zn(2+). Gly-199 lines the dihydroxyacetone phosphate pocket. His-232 lines the Zn(2+) pocket. Dihydroxyacetone phosphate is bound by residues 233-235 and 275-278; these read GSS and NIDT.

Zn(2+) is required as a cofactor.

The catalysed reaction is beta-D-fructose 1,6-bisphosphate = D-glyceraldehyde 3-phosphate + dihydroxyacetone phosphate. Its pathway is carbohydrate degradation; glycolysis; D-glyceraldehyde 3-phosphate and glycerone phosphate from D-glucose: step 4/4. Its function is as follows. Catalyzes the aldol condensation of dihydroxyacetone phosphate (DHAP or glycerone-phosphate) with glyceraldehyde 3-phosphate (G3P) to form fructose 1,6-bisphosphate (FBP) in gluconeogenesis and the reverse reaction in glycolysis. The chain is Fructose-bisphosphate aldolase from Nostoc sp. (strain PCC 7120 / SAG 25.82 / UTEX 2576).